Reading from the N-terminus, the 192-residue chain is A-type ATP synthase subunit E (192 aa).

The protein belongs to the V-ATPase E subunit family. Has multiple subunits with at least A(3), B(3), C, D, E, F, H, I and proteolipid K(x).

The protein localises to the cell membrane. Functionally, component of the A-type ATP synthase that produces ATP from ADP in the presence of a proton gradient across the membrane. The sequence is that of A-type ATP synthase subunit E from Halorubrum lacusprofundi (strain ATCC 49239 / DSM 5036 / JCM 8891 / ACAM 34).